A 251-amino-acid polypeptide reads, in one-letter code: uncharacterized protein (251 aa).

12–36 (VVTGASSGIGEATARTLAAQGFHVV) is an NADP(+) binding site. S136 is a substrate binding site. Residue Y149 is the Proton acceptor of the active site.

It belongs to the short-chain dehydrogenases/reductases (SDR) family.

This is an uncharacterized protein from Mycobacterium tuberculosis (strain CDC 1551 / Oshkosh).